The chain runs to 223 residues: Glutathione S-transferase A2 (223 aa).

N-acetylalanine is present on alanine 2. Residues 3 to 83 (GKPKLHYFNG…YIATKYNLYG (81 aa)) form the GST N-terminal domain. Lysine 4 is subject to N6-succinyllysine. Glutathione-binding positions include tyrosine 9, arginine 45, 54–55 (QV), and 67–68 (QT). In terms of domain architecture, GST C-terminal spans 85-208 (DMKERALIDM…QPGSQRKPPM (124 aa)).

The protein belongs to the GST superfamily. Alpha family. Homodimer. As to expression, expressed in corpus luteum, adrenal gland, testis, liver, lung, thyroid and kidney.

The protein resides in the cytoplasm. The catalysed reaction is RX + glutathione = an S-substituted glutathione + a halide anion + H(+). Its function is as follows. Conjugation of reduced glutathione to a wide number of exogenous and endogenous hydrophobic electrophiles. The sequence is that of Glutathione S-transferase A2 (GSTA2) from Bos taurus (Bovine).